The sequence spans 278 residues: Transcription initiation factor TFIID subunit 9 (278 aa).

The disordered stretch occupies residues 193–278 (TTTKTVGSSG…EEEEFEFVTN (86 aa)). Gly residues predominate over residues 200-210 (SSGGSGGGGGQ). Low complexity predominate over residues 231–240 (AAAVGSIAGA). Over residues 241-259 (SGSGAGSASGGGGGGGSSG) the composition is skewed to gly residues. Positions 269–278 (EEEEFEFVTN) are enriched in acidic residues.

This sequence belongs to the TAF9 family. As to quaternary structure, belongs to the TFIID complex which is composed of TATA binding protein (Tbp) and a number of TBP-associated factors (TAFs). Taf9 and Taf6 exist as a heterotetramer. Interacts with e(y)2.

It is found in the nucleus. Functionally, TFIID is a multimeric protein complex that plays a central role in mediating promoter responses to various activators and repressors. The polypeptide is Transcription initiation factor TFIID subunit 9 (Drosophila melanogaster (Fruit fly)).